The chain runs to 323 residues: Formimidoylglutamase (323 aa).

The Mn(2+) site is built by histidine 131, aspartate 157, histidine 159, aspartate 161, cysteine 245, and aspartate 247.

It belongs to the arginase family. Mn(2+) serves as cofactor.

It carries out the reaction N-formimidoyl-L-glutamate + H2O = formamide + L-glutamate. It participates in amino-acid degradation; L-histidine degradation into L-glutamate; L-glutamate from N-formimidoyl-L-glutamate (hydrolase route): step 1/1. Functionally, catalyzes the conversion of N-formimidoyl-L-glutamate to L-glutamate and formamide. This is Formimidoylglutamase from Geobacillus kaustophilus (strain HTA426).